Consider the following 355-residue polypeptide: Small ribosomal subunit protein uS2 (355 aa).

Belongs to the universal ribosomal protein uS2 family.

This chain is Small ribosomal subunit protein uS2, found in Methylorubrum extorquens (strain CM4 / NCIMB 13688) (Methylobacterium extorquens).